The sequence spans 380 residues: Cytochrome b (380 aa).

Helical transmembrane passes span 34–54, 78–99, 114–134, and 179–199; these read FGSL…LLAM, WLIR…YLHI, WNTG…GYVL, and FFAL…IHLT. Residues His-84 and His-98 each coordinate heme b. 2 residues coordinate heme b: His-183 and His-197. Residue His-202 coordinates a ubiquinone. 4 helical membrane-spanning segments follow: residues 227 to 247, 289 to 309, 321 to 341, and 348 to 368; these read TKDL…ALFS, LGGV…PFLH, LSQI…WVGS, and FIII…ILFP.

The protein belongs to the cytochrome b family. In terms of assembly, the cytochrome bc1 complex contains 11 subunits: 3 respiratory subunits (MT-CYB, CYC1 and UQCRFS1), 2 core proteins (UQCRC1 and UQCRC2) and 6 low-molecular weight proteins (UQCRH/QCR6, UQCRB/QCR7, UQCRQ/QCR8, UQCR10/QCR9, UQCR11/QCR10 and a cleavage product of UQCRFS1). This cytochrome bc1 complex then forms a dimer. Heme b is required as a cofactor.

It is found in the mitochondrion inner membrane. Its function is as follows. Component of the ubiquinol-cytochrome c reductase complex (complex III or cytochrome b-c1 complex) that is part of the mitochondrial respiratory chain. The b-c1 complex mediates electron transfer from ubiquinol to cytochrome c. Contributes to the generation of a proton gradient across the mitochondrial membrane that is then used for ATP synthesis. This Aerodramus vulcanorum (Volcano swiftlet) protein is Cytochrome b (MT-CYB).